Here is a 404-residue protein sequence, read N- to C-terminus: Short chain dehydrogenase sirR (404 aa).

A signal peptide spans 1-28; the sequence is MHSKPQRALVIGATGVSGWSLCLQLLQT. Ser56 and Leu58 together coordinate NADP(+). N-linked (GlcNAc...) asparagine glycans are attached at residues Asn67 and Asn157. Ser237 serves as the catalytic Proton donor. The N-linked (GlcNAc...) asparagine glycan is linked to Asn274. Val291 lines the NADP(+) pocket.

The protein belongs to the short-chain dehydrogenases/reductases (SDR) family. Highly divergent.

It participates in mycotoxin biosynthesis. Its function is as follows. Short chain dehydrogenase; part of the gene cluster that mediates the biosynthesis of sirodesmin PL, an epipolythiodioxopiperazine (ETP) characterized by a disulfide bridged cyclic dipeptide and that acts as a phytotoxin which is involved in the blackleg didease of canola. SirD catalyzes the O-prenylation of L-tyrosine (L-Tyr) in the presence of dimethylallyl diphosphate (DMAPP) to yield 4-O-dimethylallyl-L-Tyr, and therefore represents probably the first pathway-specific enzyme in the biosynthesis of sirodesmin PL. 4-O-dimethylallyl-L-Tyr, then undergoes condensation with L-Ser in a reaction catalyzed by the non-ribosomal peptide synthase sirP to form the diketopiperazine (DKP) backbone. Further bishydroxylation of the DKP performed by the cytochrome P450 monooxygenase sirC leads to the production of the intermediate phomamide. This step is essential to form the reactive thiol group required for toxicity of sirodesmin PL. The next steps of sirodesmin biosynthesis are not well understood yet, but some predictions could be made from intermediate compounds identification. Phomamide is converted into phomalizarine via oxidation, probably by sirT. Further oxidation, methylation (by sirM or sirN) and reduction steps convert phomalizarine to deacetyl sirodesmin. Finally, acetyltransferase sirH probably acetylates deacetyl sirodesmin to produce sirodesmin PL. The sequence is that of Short chain dehydrogenase sirR from Leptosphaeria maculans (Blackleg fungus).